The chain runs to 1530 residues: B-cell CLL/lymphoma 9-like protein (1530 aa).

Disordered regions lie at residues 1–101, 155–187, 246–353, 398–439, 473–503, 821–1076, 1250–1279, and 1310–1331; these read MHSE…VLEP, QGHSGSSTTGHVSDPGGPGLGSGHGPGIRTDLH, HISS…PSVL, SGTG…IGGG, QTQNLGGPGLDDSLMGPHHGMPPHSHHLSSP, QNGR…QNPL, KGMSHQRPPHQPDSFPPMPMGDGPDLSEVI, and SETMSQPQQNPHQGQPPPQVSS. Residues 8–18 show a composition bias toward polar residues; sequence SNHGKQVTSGA. Positions 19–34 are enriched in low complexity; the sequence is QSQLPNVNQAQQQAPA. The segment covering 81–93 has biased composition (basic and acidic residues); sequence ERSVSIDTGDQRE. The span at 156 to 165 shows a compositional bias: low complexity; that stretch reads GHSGSSTTGH. Residues 170–180 show a composition bias toward gly residues; sequence GGPGLGSGHGP. Polar residues-rich tracts occupy residues 247–264 and 278–287; these read ISSSHSPPIGTPKSQSGT and GTSTPSSTGH. 2 stretches are compositionally biased toward low complexity: residues 409-426 and 485-503; these read GPNGNPNGTNVNNNNSND and SLMGPHHGMPPHSHHLSSP. Composition is skewed to polar residues over residues 875–891, 920–930, and 944–953; these read LSSTSRLSHIPMNTGSR, QLKSPSLSQEP, and SPSQLPQSGP. Composition is skewed to low complexity over residues 960–971, 979–994, and 1031–1060; these read AASGAGTPSSTS, GPSLGLRSPSGSPGHL, and SSSTDTGMSLPPRSSNSTPISQPSNSINPS. Pro residues predominate over residues 1258 to 1268; it reads PHQPDSFPPMP.

It belongs to the BCL9 family.

The protein resides in the nucleus. Functionally, transcriptional regulator that may act as an activator. Plays a role for mesoderm patterning in early embryogenesis. The sequence is that of B-cell CLL/lymphoma 9-like protein (bcl9l) from Danio rerio (Zebrafish).